The primary structure comprises 160 residues: Cytosolic iron-sulfur assembly component 2A (160 aa).

The Zn(2+) site is built by His-89, His-123, Glu-150, and Glu-153.

Belongs to the MIP18 family. As to quaternary structure, monomer and homodimer. Component of the CIA complex. Interacts with CIAO1. Interacts with IREB2. Interacts with APAF1. In terms of tissue distribution, substantially enriched in macrophages.

Its subcellular location is the cytoplasm. Its function is as follows. Component of the cytosolic iron-sulfur protein assembly (CIA) complex, a multiprotein complex that mediates the incorporation of iron-sulfur cluster into extramitochondrial Fe/S proteins. As a CIA complex component and in collaboration with CIAO1 specifically matures ACO1 and stabilizes IREB2, connecting cytosolic iron-sulfur protein maturation with cellular iron regulation. May play a role in chromosome segregation through establishment of sister chromatid cohesion. May induce apoptosis in collaboration with APAF1. This Homo sapiens (Human) protein is Cytosolic iron-sulfur assembly component 2A.